The following is a 73-amino-acid chain: Conotoxin Bt11.1 (73 aa).

The N-terminal stretch at 1–20 (MKLCVAFLLVLVILPSVIGG) is a signal peptide. Positions 21–35 (KPSERTLSGATRRGD) are excised as a propeptide. Intrachain disulfides connect Cys39–Cys53, Cys46–Cys58, Cys52–Cys63, and Cys57–Cys70.

This sequence belongs to the conotoxin I1 superfamily. In terms of tissue distribution, expressed by the venom duct.

Its subcellular location is the secreted. In Conus betulinus (Beech cone), this protein is Conotoxin Bt11.1.